Consider the following 191-residue polypeptide: Transcriptional regulator MET32 (191 aa).

The disordered stretch occupies residues 70-96 (KKENALPKPPKSSKSKPQDRRNSTGEK). Over residues 85 to 96 (KPQDRRNSTGEK) the composition is skewed to basic and acidic residues. The segment at 98 to 120 (FKCAKCSLEFSRSSDLRRHEKTH) adopts a C2H2-type 1 zinc-finger fold. The segment at 126–150 (NICPQCGKGFARKDALKRHYDTLTC) adopts a C2H2-type 2; atypical zinc-finger fold.

In terms of assembly, interacts with MET4 and MET28.

The protein localises to the cytoplasm. Its subcellular location is the nucleus. Its function is as follows. Auxiliary transcriptional regulator of sulfur amino acid metabolism. Involved in the transcriptional activation of MET28. The sequence is that of Transcriptional regulator MET32 (MET32) from Saccharomyces cerevisiae (strain ATCC 204508 / S288c) (Baker's yeast).